The chain runs to 212 residues: Orotate phosphoribosyltransferase (212 aa).

5-phospho-alpha-D-ribose 1-diphosphate-binding positions include arginine 97, lysine 101, histidine 103, and 123-131 (EDLISTGGS). Serine 127 provides a ligand contact to orotate.

It belongs to the purine/pyrimidine phosphoribosyltransferase family. PyrE subfamily. As to quaternary structure, homodimer. Requires Mg(2+) as cofactor.

The catalysed reaction is orotidine 5'-phosphate + diphosphate = orotate + 5-phospho-alpha-D-ribose 1-diphosphate. The protein operates within pyrimidine metabolism; UMP biosynthesis via de novo pathway; UMP from orotate: step 1/2. Catalyzes the transfer of a ribosyl phosphate group from 5-phosphoribose 1-diphosphate to orotate, leading to the formation of orotidine monophosphate (OMP). This is Orotate phosphoribosyltransferase from Bacteroides thetaiotaomicron (strain ATCC 29148 / DSM 2079 / JCM 5827 / CCUG 10774 / NCTC 10582 / VPI-5482 / E50).